Here is a 313-residue protein sequence, read N- to C-terminus: Protein FixB (313 aa).

An FAD-binding site is contributed by 255-283 (LYLAVGISGQIQHMVGANASQTIFAINKD).

Belongs to the ETF alpha-subunit/FixB family. Heterodimer of FixA and FixB.

It participates in amine and polyamine metabolism; carnitine metabolism. Functionally, required for anaerobic carnitine reduction. May bring reductant to CaiA. This chain is Protein FixB, found in Escherichia coli (strain SMS-3-5 / SECEC).